The chain runs to 690 residues: Glycine--tRNA ligase beta subunit (690 aa).

It belongs to the class-II aminoacyl-tRNA synthetase family. In terms of assembly, tetramer of two alpha and two beta subunits.

Its subcellular location is the cytoplasm. It carries out the reaction tRNA(Gly) + glycine + ATP = glycyl-tRNA(Gly) + AMP + diphosphate. The protein is Glycine--tRNA ligase beta subunit of Desulfitobacterium hafniense (strain Y51).